A 350-amino-acid polypeptide reads, in one-letter code: Protein FAM118B (350 aa).

Alanine 2 carries the N-acetylalanine modification. Serine 9 bears the Phosphoserine mark. Residues 330–350 form a disordered region; that stretch reads AREGQLNGSSAAHGEIRGCST.

This sequence belongs to the FAM118 family.

The protein localises to the nucleus. It is found in the cajal body. Its function is as follows. May play a role in Cajal bodies formation. The protein is Protein FAM118B (Fam118b) of Rattus norvegicus (Rat).